Reading from the N-terminus, the 789-residue chain is MSHHSPPPPKHKGEHKGHGLPRGSERGSSSRGKDRSASVSNSVPMPAGGKASRTNCPPPAPQKTANRLINEKSPYLLQHAHNPVDWYPWGQEAFDKAKKENKPIFLSVGYSTCHWCHMMEEESFQNEEIGHLLNENFVSVMVDREERPDVDKVYMTFVQATSSGGGWPMNVWLTPSLQPFVGGTYFPPEDGLTRVGFRTVLMRICDQWKQNKNTLLENSQRVTTALLARSEISVGDRQLPPSAATMNSRCFQQLDEGYDEEYGGFAEAPKFPTPVILNFLFSYWLSHRVTQDGSRAQQMALHTLKMMANGGIRDHVGQGFHRYSTDRQWHIPHFEKMLYDQAQLSVVYCQAFQISGDEFFSDVAKGILQYVTRNLSHRSGGFYSAEDADSPPERGVKPQEGALYLWTVKEVQQLLPEPVGGASEPLTSGQLLMKHYGLSEAGNINPTQDVNGEMHGQNVLTVRDSLELTGARYGLEVEAVRALLNTGLEKLFQARKHRPKAHLDNKMLAAWNGLMVSGFAVAGSVLGMEKLVTQATNGAKFLKRHMFDVSSGRLKRTCYAGAGGTVEQSNPPCWGFLEDYAFVVRGLLDLYEASQESSWLEWALRLQDIQDKLFWDSHGGGYFCSEAELGTDLPLRLKDDQDGAEPSANSVSAHNLLRLHGLTGHKDWMDKCVCLLTAFSERMRRVPVALPEMVRALSAQQQTLKQIVICGDPQAKDTKALLQCVHSIYIPNKVLILADGDPSSFLSRQLPFLSNLRRVEDRATVYIFENQACSMPITDPCELRKLLHQ.

Positions 1 to 19 (MSHHSPPPPKHKGEHKGHG) are enriched in basic residues. The tract at residues 1 to 65 (MSHHSPPPPK…CPPPAPQKTA (65 aa)) is disordered. Residues Ser5 and Ser652 each carry the phosphoserine modification.

As to expression, testis-specific and age-dependent (at protein level). Highly expressed. Expressed in round spermatids located in the inner half-layer of the seminiferous epithelium as well as in early elongated spermatids having cytoplasmic protrusions into the tubular lumen.

Its subcellular location is the secreted. In terms of biological role, may play a role in fertility regulation. This Rattus norvegicus (Rat) protein is Spermatogenesis-associated protein 20 (Spata20).